Here is a 439-residue protein sequence, read N- to C-terminus: Cell division protein DivIB (439 aa).

Disordered regions lie at residues 1 to 96 (MDDK…DSNI) and 119 to 149 (DNEQPQSAPKEQNSDSIDEETVTKKERKSKV). Topologically, residues 1–173 (MDDKTKNDQQ…RRKRQKRIQY (173 aa)) are cytoplasmic. The segment covering 11 to 20 (ESNEDKDELE) has biased composition (acidic residues). Residues 26-38 (TSKKRRQRKRSKA) are compositionally biased toward basic residues. Residues 64–76 (KDFKKEESNDKNN) show a composition bias toward basic and acidic residues. Residues 77-86 (DSASSHANDN) show a composition bias toward low complexity. A compositionally biased stretch (acidic residues) spans 87–96 (NIDDSTDSNI). Over residues 119-133 (DNEQPQSAPKEQNSD) the composition is skewed to polar residues. A helical membrane pass occupies residues 174–194 (SVITILVLLIAVILIYMFSPL). Residues 195–263 (SKIAHVNING…NTLNVDITEN (69 aa)) form the POTRA domain. Residues 195–439 (SKIAHVNING…KINKQSSKNN (245 aa)) lie on the Extracellular side of the membrane. Positions 396-439 (YRGNTSSQSESDKNVTKSSQEENQAKEELQSVLNKINKQSSKNN) are disordered. The segment covering 405 to 424 (ESDKNVTKSSQEENQAKEEL) has biased composition (basic and acidic residues). The segment covering 426–439 (SVLNKINKQSSKNN) has biased composition (polar residues).

This sequence belongs to the FtsQ/DivIB family. DivIB subfamily.

It localises to the cell membrane. Functionally, cell division protein that may be involved in stabilizing or promoting the assembly of the division complex. In Staphylococcus aureus (strain NCTC 8325 / PS 47), this protein is Cell division protein DivIB.